The chain runs to 52 residues: Transmembrane protein ORF52 (52 aa).

The next 2 helical transmembrane spans lie at 11-31 and 32-52; these read AFLG…EIIT and FMAL…GLFV.

The protein localises to the host membrane. This Acidianus filamentous virus 1 (isolate United States/Yellowstone) (AFV-1) protein is Transmembrane protein ORF52.